We begin with the raw amino-acid sequence, 861 residues long: Glucans biosynthesis glucosyltransferase H (861 aa).

The next 6 membrane-spanning stretches (helical) occupy residues 142–162 (FILL…MKGI), 188–208 (VLPY…FCWV), 516–536 (VFLT…FLVL), 573–593 (LFST…MLIW), 600–620 (FGGV…SVLL), and 683–703 (FLWW…VSVI).

Belongs to the glycosyltransferase 2 family. OpgH subfamily.

The protein resides in the cell inner membrane. Its pathway is glycan metabolism; osmoregulated periplasmic glucan (OPG) biosynthesis. Its function is as follows. Involved in the biosynthesis of osmoregulated periplasmic glucans (OPGs). In Pseudomonas aeruginosa (strain UCBPP-PA14), this protein is Glucans biosynthesis glucosyltransferase H.